A 213-amino-acid polypeptide reads, in one-letter code: Insulin-like peptide INSL6 (213 aa).

Positions 1–20 are cleaved as a signal peptide; sequence MPRLLRLSLLWLGLLLVRFS. Intrachain disulfides connect cysteine 33–cysteine 179, cysteine 45–cysteine 192, and cysteine 178–cysteine 183. The propeptide at 55 to 168 is connecting peptide; the sequence is FEEETPFSRL…SNLFWGHHPQ (114 aa). The propeptide occupies 201–213; the sequence is LKEKRSSLVTKIY.

It belongs to the insulin family. In terms of tissue distribution, testis specific.

Its subcellular location is the secreted. Functionally, may have a role in sperm development and fertilization. The sequence is that of Insulin-like peptide INSL6 (INSL6) from Homo sapiens (Human).